A 314-amino-acid polypeptide reads, in one-letter code: tRNA pseudouridine synthase B (314 aa).

The active-site Nucleophile is Asp47.

This sequence belongs to the pseudouridine synthase TruB family. Type 1 subfamily.

It catalyses the reaction uridine(55) in tRNA = pseudouridine(55) in tRNA. Functionally, responsible for synthesis of pseudouridine from uracil-55 in the psi GC loop of transfer RNAs. The chain is tRNA pseudouridine synthase B from Vibrio vulnificus (strain CMCP6).